The chain runs to 130 residues: Fluoride-specific ion channel FluC (130 aa).

The next 4 helical transmembrane spans lie at 10–30, 41–61, 72–89, and 105–125; these read FAVA…SLWF, GTLI…TVAM, LLFG…STYE, and LVYW…GILL. The Na(+) site is built by Gly80 and Thr83.

It belongs to the fluoride channel Fluc/FEX (TC 1.A.43) family.

The protein resides in the cell inner membrane. It carries out the reaction fluoride(in) = fluoride(out). Its activity is regulated as follows. Na(+) is not transported, but it plays an essential structural role and its presence is essential for fluoride channel function. Its function is as follows. Fluoride-specific ion channel. Important for reducing fluoride concentration in the cell, thus reducing its toxicity. This Synechococcus sp. (strain JA-2-3B'a(2-13)) (Cyanobacteria bacterium Yellowstone B-Prime) protein is Fluoride-specific ion channel FluC.